The sequence spans 498 residues: Probable malate:quinone oxidoreductase (498 aa).

Belongs to the MQO family. FAD is required as a cofactor.

It catalyses the reaction (S)-malate + a quinone = a quinol + oxaloacetate. Its pathway is carbohydrate metabolism; tricarboxylic acid cycle; oxaloacetate from (S)-malate (quinone route): step 1/1. This chain is Probable malate:quinone oxidoreductase, found in Prochlorococcus marinus (strain MIT 9312).